Reading from the N-terminus, the 146-residue chain is Ribonuclease H (146 aa).

The RNase H type-1 domain maps to 1-141 (MKKVQLITDG…CDELATRAAR (141 aa)). Asp9, Glu47, Asp69, and Asp133 together coordinate Mg(2+).

The protein belongs to the RNase H family. In terms of assembly, monomer. Requires Mg(2+) as cofactor.

The protein localises to the cytoplasm. The catalysed reaction is Endonucleolytic cleavage to 5'-phosphomonoester.. Functionally, endonuclease that specifically degrades the RNA of RNA-DNA hybrids. The sequence is that of Ribonuclease H from Solibacter usitatus (strain Ellin6076).